A 122-amino-acid chain; its full sequence is Small ribosomal subunit protein uS13 (122 aa).

A compositionally biased stretch (basic residues) spans 95–116 (GLPVRGQKTKTNARTRKGRRKT). The tract at residues 95–122 (GLPVRGQKTKTNARTRKGRRKTVGAATK) is disordered.

The protein belongs to the universal ribosomal protein uS13 family. Part of the 30S ribosomal subunit. Forms a loose heterodimer with protein S19. Forms two bridges to the 50S subunit in the 70S ribosome.

In terms of biological role, located at the top of the head of the 30S subunit, it contacts several helices of the 16S rRNA. In the 70S ribosome it contacts the 23S rRNA (bridge B1a) and protein L5 of the 50S subunit (bridge B1b), connecting the 2 subunits; these bridges are implicated in subunit movement. Contacts the tRNAs in the A and P-sites. The protein is Small ribosomal subunit protein uS13 of Campylobacter concisus (strain 13826).